The following is a 380-amino-acid chain: TPR repeat-containing thioredoxin TDX (380 aa).

Val-2 is modified (N-acetylvaline). Basic and acidic residues predominate over residues 49-59 (TERDYEDKAET). A disordered region spans residues 49–115 (TERDYEDKAE…DENRDDAQSE (67 aa)). Residues 69–91 (DDDDDIMESDVELDNSDVVEPDN) are compositionally biased toward acidic residues. Over residues 106-115 (DENRDDAQSE) the composition is skewed to basic and acidic residues. TPR repeat units follow at residues 112–145 (AQSE…NPTS), 147–179 (ILYA…NSDS), and 181–213 (KGYK…DYDE). The segment covering 240–263 (RKEKELQRAERERRKQQEAQEREA) has biased composition (basic and acidic residues). Positions 240–265 (RKEKELQRAERERRKQQEAQEREAQA) are disordered. The region spanning 252–378 (RRKQQEAQER…LEQKIAQHSS (127 aa)) is the Thioredoxin domain. Active-site nucleophile residues include Cys-304 and Cys-307. Residues Cys-304 and Cys-307 are joined by a disulfide bond.

This sequence belongs to the thioredoxin family. As to quaternary structure, oligomerization under high temperature.

Its function is as follows. Thiol-disulfide oxidoreductase that possesses insulin disulfide bonds reducing activity, disulfide reductase, foldase chaperone and holdase chaperone activities. Heat shock causes oligomerization and formation of high molecular weiht (HMW) complexes with concomitant functional switching from a disulfide reductase and foldase chaperone to a holdase chaperone. May interact with HSP70 proteins through the TPR repeats. The protein is TPR repeat-containing thioredoxin TDX (TDX) of Arabidopsis thaliana (Mouse-ear cress).